A 245-amino-acid chain; its full sequence is Uridylate kinase (245 aa).

Residue 20 to 23 (KVSG) coordinates ATP. Gly62 provides a ligand contact to UMP. Positions 63 and 67 each coordinate ATP. UMP is bound by residues Asp81 and 142–149 (IGSPFFTT). Residues Thr169, Gln170, Tyr175, and Asp178 each contribute to the ATP site.

The protein belongs to the UMP kinase family. As to quaternary structure, homohexamer.

Its subcellular location is the cytoplasm. The enzyme catalyses UMP + ATP = UDP + ADP. Its pathway is pyrimidine metabolism; CTP biosynthesis via de novo pathway; UDP from UMP (UMPK route): step 1/1. Inhibited by UTP. Catalyzes the reversible phosphorylation of UMP to UDP. This Anaplasma marginale (strain St. Maries) protein is Uridylate kinase.